The primary structure comprises 379 residues: Tubby-like F-box protein 7 (379 aa).

The span at 18 to 28 (FHQGETTTAPE) shows a compositional bias: polar residues. Positions 18–41 (FHQGETTTAPESESIPPPSNMAGS) are disordered. The F-box domain occupies 42–97 (SSWSAMLPELLGEIIRRVEETEDRWPQRRDVVTCACVSKKWREITHDFARSSLNSG). Disordered stretches follow at residues 193-212 (SQPP…RRFA) and 248-278 (TLRC…IMKK).

It belongs to the TUB family. Ubiquitous.

In Arabidopsis thaliana (Mouse-ear cress), this protein is Tubby-like F-box protein 7.